A 323-amino-acid polypeptide reads, in one-letter code: Glutathione synthetase (323 aa).

Residues 133–317 (KMYALQFQSV…IGDQTIAALE (185 aa)) enclose the ATP-grasp domain. Residue 159–215 (LDELRAAVLKPLGGKAGEGILFLDPGDRNFNSLVEISTQQGQLPVMVQQYLPEAKDG) participates in ATP binding. Positions 288 and 290 each coordinate Mg(2+).

This sequence belongs to the prokaryotic GSH synthase family. Requires Mg(2+) as cofactor. Mn(2+) is required as a cofactor.

It catalyses the reaction gamma-L-glutamyl-L-cysteine + glycine + ATP = glutathione + ADP + phosphate + H(+). It participates in sulfur metabolism; glutathione biosynthesis; glutathione from L-cysteine and L-glutamate: step 2/2. This is Glutathione synthetase from Synechococcus elongatus (strain ATCC 33912 / PCC 7942 / FACHB-805) (Anacystis nidulans R2).